A 378-amino-acid polypeptide reads, in one-letter code: Beta sliding clamp (378 aa).

It belongs to the beta sliding clamp family. As to quaternary structure, forms a ring-shaped head-to-tail homodimer around DNA which binds and tethers DNA polymerases and other proteins to the DNA. The DNA replisome complex has a single clamp-loading complex (3 tau and 1 each of delta, delta', psi and chi subunits) which binds 3 Pol III cores (1 core on the leading strand and 2 on the lagging strand) each with a beta sliding clamp dimer. Additional proteins in the replisome are other copies of gamma, psi and chi, Ssb, DNA helicase and RNA primase. Interacts with YabA, and via YabA, with DnaA. During sporulation probably interacts with SirA.

Its subcellular location is the cytoplasm. The protein localises to the nucleoid. Functionally, confers DNA tethering and processivity to DNA polymerases and other proteins. Acts as a clamp, forming a ring around DNA (a reaction catalyzed by the clamp-loading complex) which diffuses in an ATP-independent manner freely and bidirectionally along dsDNA. Initially characterized for its ability to contact the catalytic subunit of DNA polymerase III (Pol III), a complex, multichain enzyme responsible for most of the replicative synthesis in bacteria; Pol III exhibits 3'-5' exonuclease proofreading activity. The beta chain is required for initiation of replication as well as for processivity of DNA replication. Overexpression in vivo stimulates inititation of DNA replication from oriC. Increased levels of DnaN remove YabA from its association with DnaA on the chromosome, allowing DnaA to bind to its targets. Its interaction with DnaA probably serves as a sink to prevent excessive replication initiation. The sequence is that of Beta sliding clamp from Bacillus subtilis (strain 168).